The primary structure comprises 368 residues: Glutamate 5-kinase (368 aa).

An ATP-binding site is contributed by Lys-9. 3 residues coordinate substrate: Ser-49, Asp-136, and Asn-148. ATP is bound by residues 168 to 169 (TD) and 210 to 216 (TGGMMTK). The region spanning 275 to 353 (AGIITIDNGA…ADIENVLGYE (79 aa)) is the PUA domain.

This sequence belongs to the glutamate 5-kinase family.

It is found in the cytoplasm. It carries out the reaction L-glutamate + ATP = L-glutamyl 5-phosphate + ADP. Its pathway is amino-acid biosynthesis; L-proline biosynthesis; L-glutamate 5-semialdehyde from L-glutamate: step 1/2. Functionally, catalyzes the transfer of a phosphate group to glutamate to form L-glutamate 5-phosphate. The chain is Glutamate 5-kinase from Haemophilus influenzae (strain PittEE).